The following is a 203-amino-acid chain: Proteasome subunit beta 2 (203 aa).

The propeptide at 1 to 9 (MGEEFQVGA) is removed in mature form; by autocatalysis. Catalysis depends on Thr-10, which acts as the Nucleophile.

Belongs to the peptidase T1B family. As to quaternary structure, the 20S proteasome core is composed of 14 alpha and 14 beta subunits that assemble into four stacked heptameric rings, resulting in a barrel-shaped structure. The two inner rings, each composed of seven catalytic beta subunits, are sandwiched by two outer rings, each composed of seven alpha subunits. The catalytic chamber with the active sites is on the inside of the barrel. Has a gated structure, the ends of the cylinder being occluded by the N-termini of the alpha-subunits. Is capped at one or both ends by the proteasome regulatory ATPase, PAN.

It localises to the cytoplasm. It catalyses the reaction Cleavage of peptide bonds with very broad specificity.. The formation of the proteasomal ATPase PAN-20S proteasome complex, via the docking of the C-termini of PAN into the intersubunit pockets in the alpha-rings, triggers opening of the gate for substrate entry. Interconversion between the open-gate and close-gate conformations leads to a dynamic regulation of the 20S proteasome proteolysis activity. In terms of biological role, component of the proteasome core, a large protease complex with broad specificity involved in protein degradation. The protein is Proteasome subunit beta 2 of Pyrobaculum neutrophilum (strain DSM 2338 / JCM 9278 / NBRC 100436 / V24Sta) (Thermoproteus neutrophilus).